The sequence spans 164 residues: Osteocalcin 2b (164 aa).

Positions 1–18 (MKSLTLLTICAVLSVSLS) are cleaved as a signal peptide. A propeptide spanning residues 19 to 115 (MNDLALDVVL…LASVLLRRKR (97 aa)) is cleaved from the precursor. A compositionally biased stretch (low complexity) spans 30 to 95 (PDPAAEPAPA…EAMAEDPAAA (66 aa)). The segment at 30-99 (PDPAAEPAPA…EDPAAATEPE (70 aa)) is disordered. Positions 128-160 (QVESLSEVCELNLACEHMAETAGIVAAYTAYYG) constitute a Gla domain. 3 residues coordinate Ca(2+): Glu-130, Glu-134, and Glu-137. 4-carboxyglutamate is present on residues Glu-130, Glu-134, and Glu-137. A disulfide bridge connects residues Cys-136 and Cys-142.

This sequence belongs to the osteocalcin/matrix Gla protein family. Post-translationally, gamma-carboxyglutamate residues are formed by vitamin K dependent carboxylation. These residues are essential for the binding of calcium.

The protein resides in the secreted. Functionally, binds strongly to apatite and calcium. This is Osteocalcin 2b from Oncorhynchus mykiss (Rainbow trout).